We begin with the raw amino-acid sequence, 646 residues long: Lamin-1 (646 aa).

The segment at 1–85 (MAEKAGEAGV…GSRATSPTSF (85 aa)) is head. Residues 1–94 (MAEKAGEAGV…FSRAQEKEEL (94 aa)) are disordered. Composition is skewed to polar residues over residues 48 to 67 (ATPS…SMSL) and 75 to 87 (QGSR…SFSR). Positions 86–126 (SRAQEKEELQNLNDRLAKILNKLNDSEEENRTLKIRLTTVQ) are coil 1A. Positions 90-446 (EKEELQNLND…KLLSDEEIRL (357 aa)) constitute an IF rod domain. The interval 127–137 (QETSADLNDQI) is linker 1. The coil 1B stretch occupies residues 138–281 (GKYRDELERA…SKLQRQSLSV (144 aa)). A compositionally biased stretch (polar residues) spans 281-301 (VTTVDHHSAQSTSRRSGSDFS). Residues 281–304 (VTTVDHHSAQSTSRRSGSDFSASV) are disordered. The segment at 282–299 (TTVDHHSAQSTSRRSGSD) is linker 2. Positions 300 to 439 (FSASVEDMRS…TELEMYNKLL (140 aa)) are coil 2. Residues 440–646 (SDEEIRLGIT…GKGILGFFGL (207 aa)) form a tail region. The short motif at 457-471 (VRHGAKKRKLTETFY) is the Nuclear localization signal element. Over residues 476 to 487 (GSRSSAGSRSAG) the composition is skewed to low complexity. Positions 476-513 (GSRSSAGSRSAGHNSTPVTKSQVTRTTVKTSENKSKAS) are disordered. Polar residues predominate over residues 488–505 (HNSTPVTKSQVTRTTVKT). An LTD domain is found at 504–618 (KTSENKSKAS…NQMATYEVSA (115 aa)).

This sequence belongs to the intermediate filament family.

It is found in the nucleus. In terms of biological role, intermediate filament (IF) protein, component of the nuclear lamina, a fibrous layer on the nucleoplasmic side of the inner nuclear membrane, which is thought to provide a framework for the nuclear envelope. In Hypsibius exemplaris (Freshwater tardigrade), this protein is Lamin-1.